We begin with the raw amino-acid sequence, 454 residues long: UDP-N-acetylmuramoylalanine--D-glutamate ligase (454 aa).

116–122 serves as a coordination point for ATP; that stretch reads GTNGKTS.

This sequence belongs to the MurCDEF family.

The protein resides in the cytoplasm. It catalyses the reaction UDP-N-acetyl-alpha-D-muramoyl-L-alanine + D-glutamate + ATP = UDP-N-acetyl-alpha-D-muramoyl-L-alanyl-D-glutamate + ADP + phosphate + H(+). The protein operates within cell wall biogenesis; peptidoglycan biosynthesis. Cell wall formation. Catalyzes the addition of glutamate to the nucleotide precursor UDP-N-acetylmuramoyl-L-alanine (UMA). The polypeptide is UDP-N-acetylmuramoylalanine--D-glutamate ligase (Lachnoclostridium phytofermentans (strain ATCC 700394 / DSM 18823 / ISDg) (Clostridium phytofermentans)).